A 389-amino-acid chain; its full sequence is Cytochrome f (389 aa).

The signal sequence occupies residues 1 to 42; it reads MTTFFISKVNGPVNKSLIWLKIHIYEFFLLKFMLLFPPTVCS. Residues Tyr-105, Cys-125, Cys-128, and His-129 each coordinate heme. A helical membrane pass occupies residues 355–375; that stretch reads LQALIVFFIFVILTQLFLVLK.

This sequence belongs to the cytochrome f family. The 4 large subunits of the cytochrome b6-f complex are cytochrome b6, subunit IV (17 kDa polypeptide, petD), cytochrome f and the Rieske protein, while the 4 small subunits are PetG, PetL, PetM and PetN. The complex functions as a dimer. Requires heme as cofactor.

The protein localises to the plastid. It is found in the chloroplast thylakoid membrane. Component of the cytochrome b6-f complex, which mediates electron transfer between photosystem II (PSII) and photosystem I (PSI), cyclic electron flow around PSI, and state transitions. The sequence is that of Cytochrome f from Pleurastrum terricola (Filamentous green alga).